A 396-amino-acid polypeptide reads, in one-letter code: Elongation factor Tu (396 aa).

The 196-residue stretch at 10–205 (KPHVNIGTIG…AVDESIPDPV (196 aa)) folds into the tr-type G domain. The tract at residues 19 to 26 (GHVDHGKT) is G1. Residue 19–26 (GHVDHGKT) coordinates GTP. T26 serves as a coordination point for Mg(2+). The interval 62–66 (GITIN) is G2. The tract at residues 83-86 (DAPG) is G3. Residues 83–87 (DAPGH) and 138–141 (NKAD) contribute to the GTP site. The segment at 138 to 141 (NKAD) is G4. The segment at 175-177 (SAL) is G5.

The protein belongs to the TRAFAC class translation factor GTPase superfamily. Classic translation factor GTPase family. EF-Tu/EF-1A subfamily. In terms of assembly, monomer.

The protein resides in the cytoplasm. It catalyses the reaction GTP + H2O = GDP + phosphate + H(+). Its function is as follows. GTP hydrolase that promotes the GTP-dependent binding of aminoacyl-tRNA to the A-site of ribosomes during protein biosynthesis. This is Elongation factor Tu from Mycolicibacterium vanbaalenii (strain DSM 7251 / JCM 13017 / BCRC 16820 / KCTC 9966 / NRRL B-24157 / PYR-1) (Mycobacterium vanbaalenii).